The primary structure comprises 824 residues: Ent-copalyl diphosphate synthase AN1, chloroplastic (824 aa).

A chloroplast-targeting transit peptide spans 1-63; sequence MPYPHPYPWQ…SSAKVFQTSR (63 aa). Residues 1–87 form a disordered region; that stretch reads MPYPHPYPWQ…QDLEDEHQAE (87 aa). The segment covering 44 to 63 has biased composition (polar residues); sequence ATTTQQPDNVSSAKVFQTSR. Lys-247 contributes to the substrate binding site. Positions 379 and 381 each coordinate Mg(2+). The DXDD motif motif lies at 379 to 382; that stretch reads DVDD. Position 465 (Lys-465) interacts with substrate.

It belongs to the terpene synthase family. Tpsc subfamily. It depends on Mg(2+) as a cofactor.

The protein resides in the plastid. It localises to the chloroplast. It carries out the reaction (2E,6E,10E)-geranylgeranyl diphosphate = ent-copalyl diphosphate. Its pathway is plant hormone biosynthesis; gibberellin biosynthesis. Involved in giberellin biosynthesis. Catalyzes the conversion of geranylgeranyl diphosphate to the gibberellin precursor ent-copalyl diphosphate. The polypeptide is Ent-copalyl diphosphate synthase AN1, chloroplastic (Zea mays (Maize)).